Here is a 450-residue protein sequence, read N- to C-terminus: Chromosomal replication initiator protein DnaA (450 aa).

The domain I, interacts with DnaA modulators stretch occupies residues 1 to 77 (MTENEQIFWN…EVYNAQIAVD (77 aa)). The tract at residues 77 to 109 (DYVYEDDLMIEQQHQGQQGYTEQAFQQLPAVQS) is domain II. Positions 110 to 328 (DLNPKYSFDN…GALKDISLVA (219 aa)) are domain III, AAA+ region. 4 residues coordinate ATP: glycine 154, glycine 156, lysine 157, and threonine 158. The interval 329–450 (NFKQIDTITV…EIETIKNKIK (122 aa)) is domain IV, binds dsDNA.

It belongs to the DnaA family. As to quaternary structure, oligomerizes as a right-handed, spiral filament on DNA at oriC.

It is found in the cytoplasm. Its function is as follows. Plays an essential role in the initiation and regulation of chromosomal replication. ATP-DnaA binds to the origin of replication (oriC) to initiate formation of the DNA replication initiation complex once per cell cycle. Binds the DnaA box (a 9 base pair repeat at the origin) and separates the double-stranded (ds)DNA. Forms a right-handed helical filament on oriC DNA; dsDNA binds to the exterior of the filament while single-stranded (ss)DNA is stabiized in the filament's interior. The ATP-DnaA-oriC complex binds and stabilizes one strand of the AT-rich DNA unwinding element (DUE), permitting loading of DNA polymerase. After initiation quickly degrades to an ADP-DnaA complex that is not apt for DNA replication. Binds acidic phospholipids. This chain is Chromosomal replication initiator protein DnaA, found in Streptococcus equi subsp. equi (strain 4047).